A 211-amino-acid chain; its full sequence is Potassium-transporting ATPase KdpC subunit (211 aa).

Residues 13–35 (VVTMVLTGLLYPLAVTGLAQLLF) traverse the membrane as a helical segment.

The protein belongs to the KdpC family. As to quaternary structure, the system is composed of three essential subunits: KdpA, KdpB and KdpC.

It is found in the cell inner membrane. Part of the high-affinity ATP-driven potassium transport (or Kdp) system, which catalyzes the hydrolysis of ATP coupled with the electrogenic transport of potassium into the cytoplasm. This subunit acts as a catalytic chaperone that increases the ATP-binding affinity of the ATP-hydrolyzing subunit KdpB by the formation of a transient KdpB/KdpC/ATP ternary complex. In Myxococcus xanthus (strain DK1622), this protein is Potassium-transporting ATPase KdpC subunit.